The chain runs to 254 residues: Anamorsin homolog (254 aa).

The tract at residues 4 to 133 (VQENNHVLYL…EVGSKSKLSF (130 aa)) is N-terminal SAM-like domain. The linker stretch occupies residues 134–165 (AKKSNVAAVWKLDDNEEEERIDDEELLDEDDK). Positions 176, 185, 188, and 190 each coordinate [2Fe-2S] cluster. Residues 176 to 190 (CGTTGKRKACKDCSC) are fe-S binding site A. Residues cysteine 215, cysteine 218, cysteine 226, and cysteine 229 each contribute to the [4Fe-4S] cluster site. Short sequence motifs (cx2C motif) lie at residues 215 to 218 (CGSC) and 226 to 229 (CATC). Residues 215 to 229 (CGSCYLGDAFRCATC) form a fe-S binding site B region.

It belongs to the anamorsin family. As to quaternary structure, monomer. Requires [2Fe-2S] cluster as cofactor. It depends on [4Fe-4S] cluster as a cofactor.

It localises to the cytoplasm. It is found in the mitochondrion intermembrane space. Functionally, component of the cytosolic iron-sulfur (Fe-S) protein assembly (CIA) machinery. Required for the maturation of extramitochondrial Fe-S proteins. Part of an electron transfer chain functioning in an early step of cytosolic Fe-S biogenesis, facilitating the de novo assembly of a [4Fe-4S] cluster on the cytosolic Fe-S scaffold complex. Electrons are transferred from NADPH via a FAD- and FMN-containing diflavin oxidoreductase. Together with the diflavin oxidoreductase, also required for the assembly of the diferric tyrosyl radical cofactor of ribonucleotide reductase (RNR), probably by providing electrons for reduction during radical cofactor maturation in the catalytic small subunit. In Anopheles gambiae (African malaria mosquito), this protein is Anamorsin homolog.